We begin with the raw amino-acid sequence, 150 residues long: Monothiol glutaredoxin-S13 (150 aa).

The disordered stretch occupies residues 30 to 52; it reads PSSSSSSLSWLTSGSPKPTSISN. The span at 31 to 44 shows a compositional bias: low complexity; that stretch reads SSSSSSLSWLTSGS. Residues 53 to 149 enclose the Glutaredoxin domain; sequence KRSSNLVVME…PTLRQAGALW (97 aa). Cys73 serves as a coordination point for [2Fe-2S] cluster. Positions 147–150 match the Responsive for interaction with TGA factors motif; that stretch reads ALWL.

The protein belongs to the glutaredoxin family. CC-type subfamily.

Its subcellular location is the cytoplasm. It localises to the nucleus. May only reduce GSH-thiol disulfides, but not protein disulfides. The sequence is that of Monothiol glutaredoxin-S13 (GRXS13) from Arabidopsis thaliana (Mouse-ear cress).